Reading from the N-terminus, the 1894-residue chain is 1,3-beta-glucan synthase component bgs2 (1894 aa).

2 disordered regions span residues 1 to 53 (MSWH…DSNK) and 282 to 310 (GPKI…PETS). Residues 32–51 (EFNNPGEESTYPQANSWNDS) are compositionally biased toward polar residues. A compositionally biased stretch (basic residues) spans 286–296 (KQAKKKQKRKS). A run of 16 helical transmembrane segments spans residues 530–550 (VSLG…FEWI), 566–586 (FLIL…VFGF), 600–620 (VAIV…LVPL), 655–675 (VSWG…YFFL), 710–730 (ILLG…TYLW), 731–751 (YILV…ISIW), 1338–1358 (IFIM…GGMY), 1394–1414 (CIIS…VQEL), 1476–1498 (LLFS…MLLF), 1503–1525 (VWIP…PFIF), 1598–1618 (FTEI…YFFI), 1637–1657 (ILIL…TFAG), 1673–1693 (FGAV…IIVF), 1697–1717 (WYLE…IIAI), 1778–1798 (DFFL…IPFI), and 1837–1857 (TMFF…LVVA).

The protein belongs to the glycosyltransferase 48 family. As to quaternary structure, component of the 1,3-beta-glucan synthase (GS) complex, composed of at least the alternate catalytic subunits bgs1, bgs2, bgs3, and bgs4, and a regulatory subunit chr4.

It localises to the prospore membrane. The enzyme catalyses [(1-&gt;3)-beta-D-glucosyl](n) + UDP-alpha-D-glucose = [(1-&gt;3)-beta-D-glucosyl](n+1) + UDP + H(+). Alternate catalytic subunit of the 1,3-beta-glucan synthase (GS) complex. Synthesizes 1,3-beta-glucan, a major structural component of the yeast cell wall. Has a role in ascospore development where it is required for the assembly of a functional spore wall. This Schizosaccharomyces pombe (strain 972 / ATCC 24843) (Fission yeast) protein is 1,3-beta-glucan synthase component bgs2.